We begin with the raw amino-acid sequence, 614 residues long: Aspartate--tRNA ligase (614 aa).

An L-aspartate-binding site is contributed by E174. Residues 198–201 are aspartate; that stretch reads QLFK. Residue R220 coordinates L-aspartate. ATP is bound by residues 220–222 and Q229; that span reads RDE. H448 is a binding site for L-aspartate. E482 lines the ATP pocket. R489 provides a ligand contact to L-aspartate. 534–537 serves as a coordination point for ATP; that stretch reads GLDR.

The protein belongs to the class-II aminoacyl-tRNA synthetase family. Type 1 subfamily. As to quaternary structure, homodimer.

It localises to the cytoplasm. The catalysed reaction is tRNA(Asp) + L-aspartate + ATP = L-aspartyl-tRNA(Asp) + AMP + diphosphate. Its function is as follows. Catalyzes the attachment of L-aspartate to tRNA(Asp) in a two-step reaction: L-aspartate is first activated by ATP to form Asp-AMP and then transferred to the acceptor end of tRNA(Asp). This is Aspartate--tRNA ligase from Lactobacillus acidophilus (strain ATCC 700396 / NCK56 / N2 / NCFM).